Consider the following 308-residue polypeptide: Spermidine synthase 2 (308 aa).

One can recognise a PABS domain in the interval 17 to 254 (PGWFSEISPL…GVIGFMLCST (238 aa)). Residue glutamine 48 participates in S-adenosyl 3-(methylsulfanyl)propylamine binding. Putrescine is bound at residue tyrosine 78. Residues glutamine 79, aspartate 103, glutamate 123, 154–155 (DG), and aspartate 173 each bind S-adenosyl 3-(methylsulfanyl)propylamine. Aspartate 173 (proton acceptor) is an active-site residue. Putrescine is bound by residues 173 to 176 (DSSD) and tyrosine 242.

Belongs to the spermidine/spermine synthase family.

The catalysed reaction is S-adenosyl 3-(methylsulfanyl)propylamine + putrescine = S-methyl-5'-thioadenosine + spermidine + H(+). It participates in amine and polyamine biosynthesis; spermidine biosynthesis; spermidine from putrescine: step 1/1. This Hyoscyamus niger (Black henbane) protein is Spermidine synthase 2.